The following is a 384-amino-acid chain: Putative aminohydrolase MTH_994 (384 aa).

H60, H62, H207, and D291 together coordinate Zn(2+).

It belongs to the metallo-dependent hydrolases superfamily. ATZ/TRZ family.

In Methanothermobacter thermautotrophicus (strain ATCC 29096 / DSM 1053 / JCM 10044 / NBRC 100330 / Delta H) (Methanobacterium thermoautotrophicum), this protein is Putative aminohydrolase MTH_994.